The primary structure comprises 1079 residues: Spermatogenesis-associated protein 31G1 (1079 aa).

Disordered regions lie at residues 97–145 (EVEE…GSEG), 261–281 (EDLE…SPSV), 297–317 (GVLS…LEVL), 331–362 (KMPQ…EGGL), 376–412 (EKPQ…RYKP), 506–566 (NLWA…SPPP), 637–678 (VPVF…EQRK), and 840–975 (PHSS…NHPA). The segment covering 98–113 (VEEEGEEEEEGEDEAS) has biased composition (acidic residues). Over residues 336-345 (FEPPMPPPCQ) the composition is skewed to pro residues. The segment covering 398-412 (LQRESSLEDPSRYKP) has biased composition (basic and acidic residues). 2 stretches are compositionally biased toward low complexity: residues 551-562 (NSSASRSPSLAL) and 645-655 (SSPSSNSVSKS). The segment covering 669–678 (PDGEAVEQRK) has biased composition (basic and acidic residues). Residues 942 to 951 (AKKREHPRKP) are compositionally biased toward basic residues.

Its function is as follows. Dispensable for normal development and fertility. This is Spermatogenesis-associated protein 31G1 from Homo sapiens (Human).